A 457-amino-acid chain; its full sequence is Cell division cycle 20.1, cofactor of APC complex (457 aa).

7 WD repeats span residues 138–175 (VDDFYLNLLDWGSANVLAIALDHTVYLWDASTGSTSEL), 180–219 (EEKGPVTSINWAPDGRHVAVGLNNSEVQLWDSASNRQLRT), 223–260 (GHQSRVGSLAWNNHILTTGGMDGLIINNDVRIRSPIVE), 264–303 (GHTQEVCGLKWSGSGQQLASGGNDNVVHIWDRSVASSNST), 312–354 (EHTS…CLNS), 356–397 (DTGS…KMAE), and 400–439 (GHTSRVLYMAQSPDGCTVASAAGDETLRFWNVFGVPETAK).

The protein belongs to the WD repeat CDC20/Fizzy family. As to quaternary structure, the APC/C is composed of at least 11 subunits that stay tightly associated throughout the cell cycle. Interacts with APC10, FZR1, FZR2, FZR3. Binds to GIG1 and PYM. Part of the mitotic checkpoint complex (MCC); interacts with MAD2, BUB3.1, BUBR1 and BUB1. Binds to cyclins CYCA1-2, CYCB2-1 and CYCB2-2. Interacts with PANS1. In terms of tissue distribution, expressed in meristems and organ primordia. Present in flowers, leaves, stems, roots, pollen grains and developing seeds.

The protein localises to the nucleus. The protein operates within protein modification; protein ubiquitination. In terms of biological role, component of the anaphase promoting complex/cyclosome (APC/C), a cell cycle-regulated E3 ubiquitin-protein ligase complex that controls progression through mitosis and the G1 phase of the cell cycle. This chain is Cell division cycle 20.1, cofactor of APC complex (CDC20-1), found in Arabidopsis thaliana (Mouse-ear cress).